Consider the following 858-residue polypeptide: Phospholipase D gamma 1 (858 aa).

The C2 domain occupies 27–163 (PFATSSGSLR…CSGNRIEGLF (137 aa)). D225 provides a ligand contact to Ca(2+). One can recognise a PLD phosphodiesterase 1 domain in the interval 364 to 399 (TIYTHHQKTVIVDAEAAQNRRKIVAFVGGLDLCNGR). Catalysis depends on residues H369, K371, and D376. H369 serves as a coordination point for a 1,2-diacyl-sn-glycero-3-phosphate. The Ca(2+) site is built by H405 and H437. Position 565 (Q565) interacts with a 1,2-diacyl-sn-glycero-3-phosphate. S680 carries the phosphoserine modification. Residues 704–731 (FMIYVHSKGMVVDDEFVLIGSANINQRS) form the PLD phosphodiesterase 2 domain. Active-site residues include H709, K711, and D716. H709 provides a ligand contact to a 1,2-diacyl-sn-glycero-3-phosphate. E772 is a binding site for Ca(2+).

This sequence belongs to the phospholipase D family. C2-PLD subfamily. The cofactor is Ca(2+). In terms of tissue distribution, highly expressed in roots and flowers, moderately in stems, leaves and seedlings and low in siliques. Not detected in seeds.

It is found in the cytoplasm. The protein resides in the membrane. It catalyses the reaction a 1,2-diacyl-sn-glycero-3-phosphocholine + H2O = a 1,2-diacyl-sn-glycero-3-phosphate + choline + H(+). Its activity is regulated as follows. Inhibited by neomycin. Up-regulated by PIP2 binding. Functionally, hydrolyzes glycerol-phospholipids at the terminal phosphodiesteric bond to generate phosphatidic acids (PA). Plays an important role in various cellular processes, including phytohormone action, vesicular trafficking, secretion, cytoskeletal arrangement, meiosis, tumor promotion, pathogenesis, membrane deterioration and senescence. Can use phosphatidylserine (PS) and phosphatidylethanolamine (PE) as substrates only in the presence of PIP2. Can use phosphatidylcholine (PC), phosphatidylglycerol (PG) or N-acylphosphatidylethanolamine (NAPE) as substrates in the presence of PE and PIP2. Involved in membrane lipid modulation under aluminum (Al) stress and negatively modulate plant tolerance to Al. The protein is Phospholipase D gamma 1 of Arabidopsis thaliana (Mouse-ear cress).